A 451-amino-acid chain; its full sequence is UPF0210 protein lin0538 (451 aa).

The protein belongs to the UPF0210 family. In terms of assembly, homodimer.

This is UPF0210 protein lin0538 from Listeria innocua serovar 6a (strain ATCC BAA-680 / CLIP 11262).